Reading from the N-terminus, the 148-residue chain is Arginine repressor (148 aa).

The protein belongs to the ArgR family.

Its subcellular location is the cytoplasm. The protein operates within amino-acid biosynthesis; L-arginine biosynthesis [regulation]. Regulates arginine biosynthesis genes. This is Arginine repressor from Prosthecochloris aestuarii (strain DSM 271 / SK 413).